A 520-amino-acid polypeptide reads, in one-letter code: D-aminopeptidase (520 aa).

Catalysis depends on S62, which acts as the Nucleophile. K65 acts as the Proton donor/acceptor in catalysis. The interval 477–487 (QRSMDAPSPGE) is important for specificity. D481 lines the substrate pocket.

This sequence belongs to the peptidase S12 family. Homodimer.

It carries out the reaction Release of an N-terminal D-amino acid from a peptide, Xaa-|-Yaa-, in which Xaa is preferably D-Ala, D-Ser or D-Thr. D-amino acid amides and methyl esters also are hydrolyzed, as is glycine amide.. Its activity is regulated as follows. Inhibited by beta-lactam compounds such as 6-aminopenicillic acid, 7-aminocephalosporanic acid, benzylpenicillin and ampicillin. Inhibited by p-chloromercuribenzoate. Its function is as follows. Hydrolyzes N-terminal residues in D-amino acid-containing peptides. In Brucella anthropi (Ochrobactrum anthropi), this protein is D-aminopeptidase (dap).